We begin with the raw amino-acid sequence, 498 residues long: MADNKSENTLSSDATEVRAQKLKLLREQIGEVYPAHFHRTMTNAELIAKYENLEPDVETQDVVTVAGRVYSSRNSGMFMDIHDARGKIQIFSHKDTTPEEARALLPMIDIGDIIGVTGSVRRTKRGELTINAQTITMLTKSLLPMPEKWHGLSDIELRYRKRHLDIMTNEDSKLRFQQRSKILSGIRRFMENDGFMEVETPMLQSVYGGATAEPFKTHHNTLKLDMYLRIAPELFLKRTLISGLTDKVFEVNRNFRNEGVSTRHNPEFTMMECYWAYADYEDIMDLVERLFESLALSIHGTTEFPFGDKTMSFKGPFKRVPMPDAVKEATGIDFRAIKTDEEARVAAKAAGFAVEKDWTWGECLAFIFEEKVESTLIQPSHVTHFPKDISPFAKEVPGEPRLVERFETYCNAWELGNAFSELNDPEEQRRRMVEQLEQAHARGEKEKQLDEEFLDAIDQGMPPAGGLGIGVDRLIMLLTNAPSIRDVILFPARRSKAD.

Mg(2+) contacts are provided by Glu407 and Glu414.

The protein belongs to the class-II aminoacyl-tRNA synthetase family. Homodimer. Mg(2+) is required as a cofactor.

The protein localises to the cytoplasm. It carries out the reaction tRNA(Lys) + L-lysine + ATP = L-lysyl-tRNA(Lys) + AMP + diphosphate. The protein is Lysine--tRNA ligase of Rhizobium johnstonii (strain DSM 114642 / LMG 32736 / 3841) (Rhizobium leguminosarum bv. viciae).